The following is a 535-amino-acid chain: Peptide chain release factor 3 (535 aa).

A tr-type G domain is found at 8–276 (ARRRTFAIIS…ALVEQAPPPG (269 aa)). GTP-binding positions include 17–24 (SHPDAGKT), 85–89 (DTPGH), and 139–142 (NKMD).

Belongs to the TRAFAC class translation factor GTPase superfamily. Classic translation factor GTPase family. PrfC subfamily.

The protein localises to the cytoplasm. Functionally, increases the formation of ribosomal termination complexes and stimulates activities of RF-1 and RF-2. It binds guanine nucleotides and has strong preference for UGA stop codons. It may interact directly with the ribosome. The stimulation of RF-1 and RF-2 is significantly reduced by GTP and GDP, but not by GMP. This is Peptide chain release factor 3 from Bordetella petrii (strain ATCC BAA-461 / DSM 12804 / CCUG 43448).